The sequence spans 430 residues: CinA-like protein (430 aa).

Belongs to the CinA family.

In Mycobacterium tuberculosis (strain ATCC 25177 / H37Ra), this protein is CinA-like protein.